A 281-amino-acid chain; its full sequence is MEALQNIGIKRRLRRFFRRDGRALIFAMDHGFEHGPTDFEPVWEHVNPRVIIRKVVRAGVDGVMMLPGMARIAGDDVKPEVGLMIKITSKTNLRPKAEQLMQSQLAFVEDAIKLGADAIAATVYWGSPQEDAMMRQFAEIVSYAHDLGFPVVQFAYPRGPYIDEKYGRKEDYRVVMYGARAAAEMGADMIKTYWTGSRETFAKVVDAAAGVPVLLSGGAKAENPLDFLKVVYEVIEAGGSGAVVGRNIFQRENPEPMIKALIRVIHRNEDPEEAAKAEGLL.

Residue K191 is the Schiff-base intermediate with dihydroxyacetone-P of the active site.

This sequence belongs to the DeoC/FbaB aldolase family. In terms of assembly, homooctamer.

It localises to the cytoplasm. The enzyme catalyses beta-D-fructose 1,6-bisphosphate = D-glyceraldehyde 3-phosphate + dihydroxyacetone phosphate. Its activity is regulated as follows. Activated by citrate. The sequence is that of Fructose-bisphosphate aldolase class 1 (fba) from Pyrococcus abyssi (strain GE5 / Orsay).